A 309-amino-acid polypeptide reads, in one-letter code: ATP synthase gamma chain (309 aa).

It belongs to the ATPase gamma chain family. F-type ATPases have 2 components, CF(1) - the catalytic core - and CF(0) - the membrane proton channel. CF(1) has five subunits: alpha(3), beta(3), gamma(1), delta(1), epsilon(1). CF(0) has three main subunits: a, b and c.

It localises to the cell membrane. Its function is as follows. Produces ATP from ADP in the presence of a proton gradient across the membrane. The gamma chain is believed to be important in regulating ATPase activity and the flow of protons through the CF(0) complex. The chain is ATP synthase gamma chain from Mycolicibacterium vanbaalenii (strain DSM 7251 / JCM 13017 / BCRC 16820 / KCTC 9966 / NRRL B-24157 / PYR-1) (Mycobacterium vanbaalenii).